The following is a 402-amino-acid chain: Propionate kinase (402 aa).

N11 and K18 together coordinate ATP. N11 serves as a coordination point for Mg(2+). R86 serves as a coordination point for substrate. Catalysis depends on D143, which acts as the Proton donor/acceptor. ATP-binding positions include H175, 203 to 207 (HLGNG), 278 to 280 (DLR), and 326 to 330 (GIGEN).

It belongs to the acetokinase family. TdcD subfamily. Homodimer. It depends on Mg(2+) as a cofactor.

It catalyses the reaction propanoate + ATP = propanoyl phosphate + ADP. The protein operates within amino-acid degradation; L-threonine degradation via propanoate pathway; propanoate from L-threonine: step 4/4. Its function is as follows. Catalyzes the conversion of propionyl phosphate and ADP to propionate and ATP. This chain is Propionate kinase, found in Salmonella agona (strain SL483).